The following is a 368-amino-acid chain: HECT-type ubiquitin ligase-interacting protein apyA (368 aa).

This sequence belongs to the arrestin family. As to quaternary structure, interacts with hulA.

May be involved in signaling by recognizing appropriately phosphorylated substrates via its arrestin domains and then recruit a HECT-type ubiquitin ligase such as hulA, leading to ubiquitination of the substrate, providing a link between ubiquitination and phosphorylation in protein regulation and stability. The protein is HECT-type ubiquitin ligase-interacting protein apyA (apyA) of Emericella nidulans (strain FGSC A4 / ATCC 38163 / CBS 112.46 / NRRL 194 / M139) (Aspergillus nidulans).